The primary structure comprises 610 residues: Cytosolic 5'-nucleotidase 1B (610 aa).

Disordered stretches follow at residues 1 to 34 (MSQT…DKTG) and 101 to 277 (GSQE…DEDD). Residues 9–34 (KKNEPGMRSSKESLEAEKRKESDKTG) are compositionally biased toward basic and acidic residues. Residues 119-132 (SQWSRISRSPSTKA) show a composition bias toward polar residues. The segment covering 148–166 (PSSSTSSRTPSTSPSLHDS) has biased composition (low complexity). The segment covering 167 to 183 (SPPPLSGQPSLQPPASP) has biased composition (pro residues). Positions 236 to 265 (SRTSPTEWKSSSQRRGIYPASTQLDRNSLS) are enriched in polar residues. D467 (nucleophile) is an active-site residue.

It belongs to the 5'-nucleotidase type 3 family. Mg(2+) is required as a cofactor. As to expression, highly expressed in testis, placenta and pancreas. Detected at lower levels in heart, kidney, liver and lung.

It localises to the cytoplasm. It carries out the reaction a ribonucleoside 5'-phosphate + H2O = a ribonucleoside + phosphate. It catalyses the reaction AMP + H2O = adenosine + phosphate. With respect to regulation, activated by ADP. In terms of biological role, catalyzes the hydrolysis of nucleotide monophosphates, releasing inorganic phosphate and the corresponding nucleoside, AMP is the major substrate. This is Cytosolic 5'-nucleotidase 1B (NT5C1B) from Homo sapiens (Human).